The primary structure comprises 295 residues: NAD kinase (295 aa).

Asp72 serves as the catalytic Proton acceptor. NAD(+)-binding positions include 72–73 (DG), 146–147 (ND), Arg157, Lys174, Asp176, 187–192 (TAYALS), and Gln247.

This sequence belongs to the NAD kinase family. A divalent metal cation is required as a cofactor.

It localises to the cytoplasm. It catalyses the reaction NAD(+) + ATP = ADP + NADP(+) + H(+). Functionally, involved in the regulation of the intracellular balance of NAD and NADP, and is a key enzyme in the biosynthesis of NADP. Catalyzes specifically the phosphorylation on 2'-hydroxyl of the adenosine moiety of NAD to yield NADP. The chain is NAD kinase from Pseudomonas aeruginosa (strain LESB58).